Consider the following 686-residue polypeptide: tRNA 5-methylaminomethyl-2-thiouridine biosynthesis bifunctional protein MnmC (686 aa).

The tRNA (mnm(5)s(2)U34)-methyltransferase stretch occupies residues 1–258 (MPNIPLRVNS…RRALRRQQLD (258 aa)). The interval 276–686 (IGGGVASANL…MRKLIKGKAL (411 aa)) is FAD-dependent cmnm(5)s(2)U34 oxidoreductase.

It in the N-terminal section; belongs to the methyltransferase superfamily. tRNA (mnm(5)s(2)U34)-methyltransferase family. This sequence in the C-terminal section; belongs to the DAO family. FAD is required as a cofactor.

Its subcellular location is the cytoplasm. It catalyses the reaction 5-aminomethyl-2-thiouridine(34) in tRNA + S-adenosyl-L-methionine = 5-methylaminomethyl-2-thiouridine(34) in tRNA + S-adenosyl-L-homocysteine + H(+). Functionally, catalyzes the last two steps in the biosynthesis of 5-methylaminomethyl-2-thiouridine (mnm(5)s(2)U) at the wobble position (U34) in tRNA. Catalyzes the FAD-dependent demodification of cmnm(5)s(2)U34 to nm(5)s(2)U34, followed by the transfer of a methyl group from S-adenosyl-L-methionine to nm(5)s(2)U34, to form mnm(5)s(2)U34. In Shewanella loihica (strain ATCC BAA-1088 / PV-4), this protein is tRNA 5-methylaminomethyl-2-thiouridine biosynthesis bifunctional protein MnmC.